The following is a 253-amino-acid chain: Zwei Ig domain protein zig-4 (253 aa).

Residues Met-1–Ala-16 form the signal peptide. 2 Ig-like C2-type domains span residues Pro-43–Glu-146 and Pro-162–Tyr-245. Disulfide bonds link Cys-67–Cys-130 and Cys-183–Cys-229.

Expressed in PVT, ASK, BAG, M2 and ASI neurons. In L1 larvae, expressed in pharyngeal ectoderm and mesoderm.

The protein localises to the secreted. Its function is as follows. Required for maintaining axon position of PVQ and PVP neurons postembryonically in the ventral nerve cord (VNC) by preventing axons drifting into the opposite side of the VNC that could occur during body growth and movement. The protein is Zwei Ig domain protein zig-4 of Caenorhabditis elegans.